Consider the following 60-residue polypeptide: Potassium channel toxin alpha-KTx 29.2 (60 aa).

An N-terminal signal peptide occupies residues 1–28 (MKSVCGVLIILVVLTTMLSISTFSTVGA). Intrachain disulfides connect C32-C51, C40-C56, and C44-C58.

It belongs to the short scorpion toxin superfamily. Potassium channel inhibitor family. Alpha-KTx 29 subfamily. Expressed by the venom gland.

The protein resides in the secreted. Weakly inhibits the Kv1.3/KCNA3 channel (1 uM of thetoxin inhibits currents by 13.2%) and Kv7.1/KCNQ1 channel (10 uM of the toxin inhibits currents by 27.7%). The protein is Potassium channel toxin alpha-KTx 29.2 of Lychas mucronatus (Chinese swimming scorpion).